The primary structure comprises 262 residues: Ornithine carbamoyltransferase (262 aa).

Carbamoyl phosphate-binding positions include 3–7 (STRTR), glutamine 30, arginine 54, and 81–84 (HPTQ). L-ornithine is bound by residues asparagine 114, aspartate 178, and 182 to 183 (SM). Residues 219–222 (HCLP) and threonine 247 contribute to the carbamoyl phosphate site.

This sequence belongs to the aspartate/ornithine carbamoyltransferase superfamily. OTCase family.

The protein localises to the cytoplasm. It carries out the reaction carbamoyl phosphate + L-ornithine = L-citrulline + phosphate + H(+). It functions in the pathway amino-acid biosynthesis; L-arginine biosynthesis; L-arginine from L-ornithine and carbamoyl phosphate: step 1/3. In terms of biological role, reversibly catalyzes the transfer of the carbamoyl group from carbamoyl phosphate (CP) to the N(epsilon) atom of ornithine (ORN) to produce L-citrulline. In Neisseria lactamica, this protein is Ornithine carbamoyltransferase (argF).